The following is a 422-amino-acid chain: Putidaredoxin reductase CamA (422 aa).

Residues A15, D37, K50, V83, and R134 each contribute to the FAD site. Residue 156–165 (GGGYIGLEVA) participates in NAD(+) binding. Residues D284 and V302 each coordinate FAD.

This sequence belongs to the FAD-dependent oxidoreductase family. In terms of assembly, homodimer or monomer. It depends on FAD as a cofactor.

It carries out the reaction 2 reduced [2Fe-2S]-[putidaredoxin] + NAD(+) + H(+) = 2 oxidized [2Fe-2S]-[putidaredoxin] + NADH. The protein operates within terpene metabolism; (R)-camphor degradation. Functionally, the oxidation of camphor by cytochrome P450-CAM CamC requires the participation of the flavoprotein, putidaredoxin reductase CamA, and the iron-sulfur protein, putidaredoxin CamB, to mediate the transfer of electrons from NADH to P450 for oxygen activation. This chain is Putidaredoxin reductase CamA, found in Pseudomonas putida (Arthrobacter siderocapsulatus).